The chain runs to 83 residues: Subtilisin-chymotrypsin inhibitor CI-1A (83 aa).

Residues 1–24 are disordered; the sequence is MSSMEGSVLKYPEPTEGSIGASSA.

This sequence belongs to the protease inhibitor I13 (potato type I serine protease inhibitor) family.

Its function is as follows. Inhibits both subtilisin and chymotrypsin. In Hordeum vulgare (Barley), this protein is Subtilisin-chymotrypsin inhibitor CI-1A.